The chain runs to 260 residues: Proline-rich protein 33 (260 aa).

A disordered region spans residues 29–132; that stretch reads GVQTVSPRPE…KVAPKPSRSG (104 aa). Pro residues predominate over residues 73-83; sequence GPSPYSPPPAA.

The polypeptide is Proline-rich protein 33 (Prr33) (Mus musculus (Mouse)).